A 189-amino-acid polypeptide reads, in one-letter code: Ribosome maturation factor RimM (189 aa).

Residues M1–T16 show a composition bias toward polar residues. Residues M1–D21 form a disordered region. The 72-residue stretch at E118–Y189 folds into the PRC barrel domain.

This sequence belongs to the RimM family. In terms of assembly, binds ribosomal protein uS19.

It localises to the cytoplasm. An accessory protein needed during the final step in the assembly of 30S ribosomal subunit, possibly for assembly of the head region. Essential for efficient processing of 16S rRNA. May be needed both before and after RbfA during the maturation of 16S rRNA. It has affinity for free ribosomal 30S subunits but not for 70S ribosomes. The polypeptide is Ribosome maturation factor RimM (Thiobacillus denitrificans (strain ATCC 25259 / T1)).